Consider the following 409-residue polypeptide: 5-aminolevulinate synthase (409 aa).

Residues arginine 21, serine 137, and lysine 156 each coordinate substrate. 3 residues coordinate pyridoxal 5'-phosphate: serine 189, histidine 217, and threonine 245. Lysine 248 is an active-site residue. N6-(pyridoxal phosphate)lysine is present on lysine 248. Residues threonine 277 and threonine 278 each coordinate pyridoxal 5'-phosphate. Threonine 365 provides a ligand contact to substrate.

This sequence belongs to the class-II pyridoxal-phosphate-dependent aminotransferase family. Homodimer. Pyridoxal 5'-phosphate serves as cofactor.

The catalysed reaction is succinyl-CoA + glycine + H(+) = 5-aminolevulinate + CO2 + CoA. Its pathway is porphyrin-containing compound metabolism; protoporphyrin-IX biosynthesis; 5-aminolevulinate from glycine: step 1/1. The polypeptide is 5-aminolevulinate synthase (hemA) (Paracoccus denitrificans (strain Pd 1222)).